Here is a 305-residue protein sequence, read N- to C-terminus: Putative monooxygenase p33MONOX (305 aa).

Disordered stretches follow at residues 1 to 20 and 37 to 56; these read MASR…LGKM and LEDP…VPWK. The residue at position 44 (Thr-44) is a Phosphothreonine. A Flavin-containing monooxygenase motif motif is present at residues 67-77; the sequence is LAKVEEGEASL. A disordered region spans residues 159–305; it reads SGEITKEERQ…DLNVLTPTGF (147 aa). Residues 169–183 are compositionally biased toward low complexity; it reads PASAQSTPSTTPHSS. Thr-175 is modified (phosphothreonine). Phosphoserine occurs at positions 182 and 183. Polar residues-rich tracts occupy residues 191–210 and 233–243; these read WFTS…TMDS and KYDSGSSTTQA.

Belongs to the P33MONOX family. As to quaternary structure, interacts with NELFB, NOL12 and PRNP.

It localises to the cytoplasm. In terms of biological role, potential NADPH-dependent oxidoreductase. May be involved in the regulation of neuronal survival, differentiation and axonal outgrowth. In Pongo abelii (Sumatran orangutan), this protein is Putative monooxygenase p33MONOX (P33MONOX).